A 168-amino-acid chain; its full sequence is uncharacterized protein (168 aa).

Disordered stretches follow at residues 1-35, 48-97, and 126-168; these read MGSS…KKLD, KVKK…DKGN, and ASIT…GLGM. A coiled-coil region spans residues 29-95; the sequence is KEKKKLDEKE…KNSLSRSQDK (67 aa). Residues 68 to 85 show a composition bias toward basic and acidic residues; sequence LAEDPMVKNVAENDHDQM. The segment covering 126 to 139 has biased composition (polar residues); it reads ASITESSPSAQSNK. Residues 140 to 150 are compositionally biased toward basic and acidic residues; it reads TNDKQREKELE. Residues 157 to 168 are compositionally biased toward basic residues; sequence VLHKGTKKGLGM.

This is an uncharacterized protein from Schizosaccharomyces pombe (strain 972 / ATCC 24843) (Fission yeast).